Reading from the N-terminus, the 251-residue chain is Ubiquinone biosynthesis O-methyltransferase (251 aa).

Residues Arg-36, Gly-61, Asp-82, and Ile-124 each contribute to the S-adenosyl-L-methionine site.

This sequence belongs to the methyltransferase superfamily. UbiG/COQ3 family.

It catalyses the reaction a 3-demethylubiquinol + S-adenosyl-L-methionine = a ubiquinol + S-adenosyl-L-homocysteine + H(+). The catalysed reaction is a 3-(all-trans-polyprenyl)benzene-1,2-diol + S-adenosyl-L-methionine = a 2-methoxy-6-(all-trans-polyprenyl)phenol + S-adenosyl-L-homocysteine + H(+). It functions in the pathway cofactor biosynthesis; ubiquinone biosynthesis. Functionally, O-methyltransferase that catalyzes the 2 O-methylation steps in the ubiquinone biosynthetic pathway. This is Ubiquinone biosynthesis O-methyltransferase from Rickettsia akari (strain Hartford).